We begin with the raw amino-acid sequence, 1445 residues long: Spermatogenesis-associated protein 31E1 (1445 aa).

Residues 64-84 (WMMDFILTSVCGLVLLFLLLL) form a helical membrane-spanning segment. Disordered stretches follow at residues 90-115 (PPSPPPGRKRSSREPQRERSGRSRSR) and 169-262 (VPAK…PDSS). Over residues 101 to 110 (SREPQRERSG) the composition is skewed to basic and acidic residues. Positions 241–260 (VFPPSPQPHGPLASSPPPPD) are enriched in pro residues. N-linked (GlcNAc...) asparagine glycosylation occurs at N408. Disordered regions lie at residues 411 to 430 (TQPQQLPRPQQVSDATTVGN), 460 to 557 (NPSS…ERTQ), 592 to 619 (LSQPTAHLPQERPASWSPKSAPILPGVV), and 637 to 761 (QEQS…KEHL). Polar residues predominate over residues 664 to 681 (PQSQAEDTQQALLPSQPS). N819, N906, and N1160 each carry an N-linked (GlcNAc...) asparagine glycan. Disordered regions lie at residues 894 to 966 (FLGK…TCSL), 1143 to 1242 (RLPT…IGDK), 1254 to 1280 (KGQTPPESHFQRKISHHPQGLHPRKGG), and 1378 to 1445 (SPKA…CLAS). Polar residues-rich tracts occupy residues 906-915 (NRTTSKSVPT) and 1148-1165 (APLSTSQSVSGKNMTASQ). Residues 1202-1217 (DKGEAHRRPRTGEQGH) show a composition bias toward basic and acidic residues.

The protein belongs to the SPATA31 family.

Its subcellular location is the membrane. Functionally, may play a role in spermatogenesis. The protein is Spermatogenesis-associated protein 31E1 (SPATA31E1) of Homo sapiens (Human).